Here is a 691-residue protein sequence, read N- to C-terminus: Elongation factor G (691 aa).

Positions 8-282 constitute a tr-type G domain; the sequence is ERVRNIGIAA…AVVDYLPAPI (275 aa). Residues 17–24, 81–85, and 135–138 contribute to the GTP site; these read AHIDAGKT, DTPGH, and NKMD.

The protein belongs to the TRAFAC class translation factor GTPase superfamily. Classic translation factor GTPase family. EF-G/EF-2 subfamily.

The protein resides in the cytoplasm. Functionally, catalyzes the GTP-dependent ribosomal translocation step during translation elongation. During this step, the ribosome changes from the pre-translocational (PRE) to the post-translocational (POST) state as the newly formed A-site-bound peptidyl-tRNA and P-site-bound deacylated tRNA move to the P and E sites, respectively. Catalyzes the coordinated movement of the two tRNA molecules, the mRNA and conformational changes in the ribosome. The chain is Elongation factor G from Synechococcus sp. (strain CC9902).